Consider the following 588-residue polypeptide: Arginine--tRNA ligase (588 aa).

Positions 124–134 match the 'HIGH' region motif; sequence PNVAKPMHVGH.

Belongs to the class-I aminoacyl-tRNA synthetase family. In terms of assembly, monomer.

The protein localises to the cytoplasm. The enzyme catalyses tRNA(Arg) + L-arginine + ATP = L-arginyl-tRNA(Arg) + AMP + diphosphate. This chain is Arginine--tRNA ligase, found in Maricaulis maris (strain MCS10) (Caulobacter maris).